Consider the following 574-residue polypeptide: ATP synthase subunit beta, mitochondrial (574 aa).

A mitochondrion-targeting transit peptide spans Met-1–Ala-26. An ATP-binding site is contributed by Gly-183–Thr-190.

It belongs to the ATPase alpha/beta chains family. As to quaternary structure, F-type ATPases have 2 components, CF(1) - the catalytic core - and CF(0) - the membrane proton channel. CF(1) has five subunits: alpha(3), beta(3), gamma(1), delta(1), epsilon(1). CF(0) has three main subunits: a, b and c.

It localises to the mitochondrion. The protein localises to the mitochondrion inner membrane. It catalyses the reaction ATP + H2O + 4 H(+)(in) = ADP + phosphate + 5 H(+)(out). Its function is as follows. Mitochondrial membrane ATP synthase (F(1)F(0) ATP synthase or Complex V) produces ATP from ADP in the presence of a proton gradient across the membrane which is generated by electron transport complexes of the respiratory chain. F-type ATPases consist of two structural domains, F(1) - containing the extramembraneous catalytic core, and F(0) - containing the membrane proton channel, linked together by a central stalk and a peripheral stalk. During catalysis, ATP synthesis in the catalytic domain of F(1) is coupled via a rotary mechanism of the central stalk subunits to proton translocation. Subunits alpha and beta form the catalytic core in F(1). Rotation of the central stalk against the surrounding alpha(3)beta(3) subunits leads to hydrolysis of ATP in three separate catalytic sites on the beta subunits. The chain is ATP synthase subunit beta, mitochondrial (ATP2) from Chlamydomonas reinhardtii (Chlamydomonas smithii).